A 266-amino-acid polypeptide reads, in one-letter code: Shikimate dehydrogenase (NADP(+)) (266 aa).

Residues 14–16 (SLS) and threonine 61 each bind shikimate. Lysine 65 acts as the Proton acceptor in catalysis. Residues asparagine 85 and aspartate 100 each contribute to the shikimate site. Residues 124-128 (GAGGA) and alanine 210 contribute to the NADP(+) site. Tyrosine 212 lines the shikimate pocket. NADP(+) is bound at residue glycine 233.

This sequence belongs to the shikimate dehydrogenase family. As to quaternary structure, homodimer.

The enzyme catalyses shikimate + NADP(+) = 3-dehydroshikimate + NADPH + H(+). The protein operates within metabolic intermediate biosynthesis; chorismate biosynthesis; chorismate from D-erythrose 4-phosphate and phosphoenolpyruvate: step 4/7. Its function is as follows. Involved in the biosynthesis of the chorismate, which leads to the biosynthesis of aromatic amino acids. Catalyzes the reversible NADPH linked reduction of 3-dehydroshikimate (DHSA) to yield shikimate (SA). The protein is Shikimate dehydrogenase (NADP(+)) of Halobacterium salinarum (strain ATCC 29341 / DSM 671 / R1).